We begin with the raw amino-acid sequence, 176 residues long: Ribosome maturation factor RimM (176 aa).

Residues 99–174 form the PRC barrel domain; the sequence is KDEFYVRDLI…IVLIQPELWN (76 aa).

This sequence belongs to the RimM family. In terms of assembly, binds ribosomal protein uS19.

The protein resides in the cytoplasm. An accessory protein needed during the final step in the assembly of 30S ribosomal subunit, possibly for assembly of the head region. Essential for efficient processing of 16S rRNA. May be needed both before and after RbfA during the maturation of 16S rRNA. It has affinity for free ribosomal 30S subunits but not for 70S ribosomes. This is Ribosome maturation factor RimM from Leptospira borgpetersenii serovar Hardjo-bovis (strain JB197).